Here is a 158-residue protein sequence, read N- to C-terminus: Phosphopantetheine adenylyltransferase (158 aa).

S8 lines the substrate pocket. Residues 8–9 (SF) and H16 each bind ATP. Substrate is bound by residues K40, T72, and R86. Residues 87 to 89 (GLR), E97, and 122 to 128 (HSFLSSS) each bind ATP.

This sequence belongs to the bacterial CoaD family. Homohexamer. Mg(2+) serves as cofactor.

It localises to the cytoplasm. It catalyses the reaction (R)-4'-phosphopantetheine + ATP + H(+) = 3'-dephospho-CoA + diphosphate. The protein operates within cofactor biosynthesis; coenzyme A biosynthesis; CoA from (R)-pantothenate: step 4/5. Its function is as follows. Reversibly transfers an adenylyl group from ATP to 4'-phosphopantetheine, yielding dephospho-CoA (dPCoA) and pyrophosphate. The polypeptide is Phosphopantetheine adenylyltransferase (Prochlorococcus marinus (strain NATL2A)).